We begin with the raw amino-acid sequence, 392 residues long: tRNA (guanine-N(7)-)-methyltransferase (392 aa).

S-adenosyl-L-methionine is bound by residues E123, E148, and D175. Substrate contacts are provided by K201 and D231.

This sequence belongs to the class I-like SAM-binding methyltransferase superfamily. TrmB family.

It catalyses the reaction guanosine(46) in tRNA + S-adenosyl-L-methionine = N(7)-methylguanosine(46) in tRNA + S-adenosyl-L-homocysteine. The protein operates within tRNA modification; N(7)-methylguanine-tRNA biosynthesis. Catalyzes the formation of N(7)-methylguanine at position 46 (m7G46) in tRNA. The sequence is that of tRNA (guanine-N(7)-)-methyltransferase from Campylobacter jejuni (strain RM1221).